The following is a 276-amino-acid chain: Mitochondrial outer membrane protein porin 1 (276 aa).

The protein belongs to the eukaryotic mitochondrial porin (TC 1.B.8.1) family. As to expression, expressed in shoot meristems, root meristematic zone, lateral roots, leaves, stigma and anthers.

The protein resides in the mitochondrion outer membrane. Its function is as follows. Forms a channel through the mitochondrial outer membrane that allows diffusion of small hydrophilic molecules. The channel adopts an open conformation at low or zero membrane potential and a closed conformation at potentials above 30-40 mV. The open state has a weak anion selectivity whereas the closed state is cation-selective. Involved in plant development at reproductive stage, is important for pollen development and may regulate hydrogen peroxide generation during disease resistance. In Arabidopsis thaliana (Mouse-ear cress), this protein is Mitochondrial outer membrane protein porin 1 (VDAC1).